A 387-amino-acid polypeptide reads, in one-letter code: Putative ribosomal RNA large subunit methyltransferase MJ1649 (387 aa).

The region spanning Leu5–Lys81 is the PUA domain.

It belongs to the methyltransferase superfamily. RlmI family.

It localises to the cytoplasm. This is Putative ribosomal RNA large subunit methyltransferase MJ1649 from Methanocaldococcus jannaschii (strain ATCC 43067 / DSM 2661 / JAL-1 / JCM 10045 / NBRC 100440) (Methanococcus jannaschii).